The chain runs to 415 residues: Multidrug resistance protein MdtA (415 aa).

The N-terminal stretch at 1–21 (MKGSYKSRWVIVIVVVIAAIA) is a signal peptide. 2 disordered regions span residues 32–60 (SRSA…GPLA) and 392–415 (EAQS…GARS). The segment covering 399–415 (PEEKATSREYAKKGARS) has biased composition (basic and acidic residues).

Belongs to the membrane fusion protein (MFP) (TC 8.A.1) family. In terms of assembly, part of a tripartite efflux system composed of MdtA, MdtB and MdtC.

The protein localises to the cell inner membrane. In terms of biological role, the MdtABC tripartite complex confers resistance against novobiocin and deoxycholate. This chain is Multidrug resistance protein MdtA, found in Escherichia coli (strain 55989 / EAEC).